The chain runs to 27 residues: Ganodermin (27 aa).

Has antifungal activity against B.cinera, F.oxysporum and P.piricola with IC(50) values of 15.2 uM, 12.4 uM and 18.1 uM, respectively. Lacks hemagglutinating activity towards rabbit erythrocytes. Lacks deoxyribonuclease, ribonuclease and protease inhibitory activities. This chain is Ganodermin, found in Ganoderma lucidum (Ling zhi medicinal fungus).